Reading from the N-terminus, the 776-residue chain is Transcriptional regulator QRICH1 (776 aa).

Residue M1 is modified to N-acetylmethionine. Residues 6-48 (ENTISFEEYIRVKARSVPQHRMKEFLDSLASKGPEALQEFQQT) form the CARD domain. 2 disordered regions span residues 139–164 (IQGQ…PSQL) and 218–240 (ALSP…GTAS). S345 is modified (phosphoserine). Glycyl lysine isopeptide (Lys-Gly) (interchain with G-Cter in SUMO2) cross-links involve residues K353 and K358. Low complexity predominate over residues 419–429 (QQQPQQQTPQE). The segment at 419 to 441 (QQQPQQQTPQEQTPPPQQQQQQL) is disordered. A Phosphoserine modification is found at S464.

It is found in the nucleus. The protein resides in the cytoplasm. The protein localises to the cell membrane. Functionally, transcriptional regulator that acts as a mediator of the integrated stress response (ISR) through transcriptional control of protein homeostasis under conditions of ER stress. Controls the outcome of the unfolded protein response (UPR) which is an ER-stress response pathway. ER stress induces QRICH1 translation by a ribosome translation re-initiation mechanism in response to EIF2S1/eIF-2-alpha phosphorylation, and stress-induced QRICH1 regulates a transcriptional program associated with protein translation, protein secretion-mediated proteotoxicity and cell death during the terminal UPR. May cooperate with ATF4 transcription factor signaling to regulate ER homeostasis which is critical for cell viability. Up-regulates CASP3/caspase-3 activity in epithelial cells under ER stress. Central regulator of proteotoxicity associated with ER stress-mediated inflammatory diseases in the intestines and liver. Involved in chondrocyte hypertrophy, a process required for normal longitudinal bone growth. In Homo sapiens (Human), this protein is Transcriptional regulator QRICH1.